The sequence spans 260 residues: Ribosomal RNA small subunit methyltransferase J (260 aa).

S-adenosyl-L-methionine contacts are provided by residues 125–126 and D179; that span reads ER. The interval 234–260 is disordered; the sequence is IDGPKPSHALDGKSSRYDIYPKKALKP. The segment covering 241–254 has biased composition (basic and acidic residues); that stretch reads HALDGKSSRYDIYP.

The protein belongs to the methyltransferase superfamily. RsmJ family.

The protein resides in the cytoplasm. The enzyme catalyses guanosine(1516) in 16S rRNA + S-adenosyl-L-methionine = N(2)-methylguanosine(1516) in 16S rRNA + S-adenosyl-L-homocysteine + H(+). Specifically methylates the guanosine in position 1516 of 16S rRNA. The chain is Ribosomal RNA small subunit methyltransferase J from Pseudomonas fluorescens (strain SBW25).